The following is a 357-amino-acid chain: Phosphoribosylformylglycinamidine cyclo-ligase (357 aa).

Belongs to the AIR synthase family.

Its subcellular location is the cytoplasm. The enzyme catalyses 2-formamido-N(1)-(5-O-phospho-beta-D-ribosyl)acetamidine + ATP = 5-amino-1-(5-phospho-beta-D-ribosyl)imidazole + ADP + phosphate + H(+). It participates in purine metabolism; IMP biosynthesis via de novo pathway; 5-amino-1-(5-phospho-D-ribosyl)imidazole from N(2)-formyl-N(1)-(5-phospho-D-ribosyl)glycinamide: step 2/2. The protein is Phosphoribosylformylglycinamidine cyclo-ligase of Agrobacterium fabrum (strain C58 / ATCC 33970) (Agrobacterium tumefaciens (strain C58)).